Consider the following 120-residue polypeptide: Ribosome-binding factor A (120 aa).

This sequence belongs to the RbfA family. In terms of assembly, monomer. Binds 30S ribosomal subunits, but not 50S ribosomal subunits or 70S ribosomes.

The protein resides in the cytoplasm. One of several proteins that assist in the late maturation steps of the functional core of the 30S ribosomal subunit. Associates with free 30S ribosomal subunits (but not with 30S subunits that are part of 70S ribosomes or polysomes). Required for efficient processing of 16S rRNA. May interact with the 5'-terminal helix region of 16S rRNA. This Buchnera aphidicola subsp. Acyrthosiphon pisum (strain 5A) protein is Ribosome-binding factor A.